The sequence spans 240 residues: uncharacterized protein (240 aa).

Helical transmembrane passes span 12–32, 66–86, and 89–109; these read ICIH…ILMS, IQVL…FVLV, and ISGY…IYFF. Residues N129 and N157 are each glycosylated (N-linked (GlcNAc...) asparagine; by host).

It is found in the membrane. This is an uncharacterized protein from Acanthamoeba polyphaga mimivirus (APMV).